Here is a 449-residue protein sequence, read N- to C-terminus: MADQTKKRYVTSEDLKKHNKPGDLWISIQGKVYDVSDWVKSHPGGEAAILNLAGQDVTDAFIAYHPGTAWHHLEKLHNGYHVRDHHVSDVSRDYRRLAAEFSKRGLFDKKGHVTLYTLTCVGVMLAAVLYGVLACTSIWAHLISAVLLGLLWIQSAYVGHDSGHYTVTSTKPCNKLIQLLSGNCLTGISIAWWKWTHNAHHIACNSLDHDPDLQHIPIFAVSTKFFNSMTSRFYGRKLTFDPLARFLISYQHWTFYPVMCVGRINLFIQTFLLLFSKRHVPDRALNIAGILVFWTWFPLLVSFLPNWQERFIFVFVSFAVTAIQHVQFCLNHFAADVYTGPPNGNDWFEKQTAGTLDISCRSFMDWFFGGLQFQLEHHLFPRLPRCHLRTVSPVVKELCKKHNLPYRSLSWWEANVWTIRTLKNAAIQARDATNPVLKNLLWEAVNTHG.

Positions 7–91 (KRYVTSEDLK…VRDHHVSDVS (85 aa)) constitute a Cytochrome b5 heme-binding domain. Positions 42 and 65 each coordinate heme. The next 2 membrane-spanning stretches (helical) occupy residues 113–133 (VTLY…YGVL) and 138–158 (IWAH…SAYV). A Histidine box-1 motif is present at residues 160-164 (HDSGH). The helical transmembrane segment at 176-196 (LIQLLSGNCLTGISIAWWKWT) threads the bilayer. Residues 197-201 (HNAHH) carry the Histidine box-2 motif. A run of 3 helical transmembrane segments spans residues 255–275 (FYPV…LLLF), 284–304 (ALNI…VSFL), and 311–331 (FIFV…FCLN). The Histidine box-3 motif lies at 374-378 (QLEHH).

The protein belongs to the fatty acid desaturase type 1 family. It depends on Fe cation as a cofactor. As to expression, highly expressed in flowers and siliques. Expressed at low levels in roots, leaves and stems.

Its subcellular location is the endoplasmic reticulum membrane. It catalyses the reaction an N-acyl-(4R)-4-hydroxysphinganine + 2 Fe(II)-[cytochrome b5] + O2 + 2 H(+) = a (4R,8E)-4-hydroxysphingenine ceramide + 2 Fe(III)-[cytochrome b5] + 2 H2O. It carries out the reaction an N-acyl-(4R)-4-hydroxysphinganine + 2 Fe(II)-[cytochrome b5] + O2 + 2 H(+) = a (4R,8Z)-4-hydroxysphing-8-enine ceramide + 2 Fe(III)-[cytochrome b5] + 2 H2O. Plays a major role as delta(8)-fatty-acid desaturase which introduces a double bond at the 8-position in the long-chain base (LCB) of ceramides with or without a hydroxy group at the 4-position. The enzyme produces both the 8E and 8Z isomers (in a 4:1 ratio). This structural modification contributes to the quantitative partitioning of ceramides between the two major sphingolipid classes, glucosylceramides and glycosylinositolphosphoryl ceramides. Sphingolipids are important membrane components involved in environmental stress responses, such as resistance to chilling, and act as cell signaling molecules. In Arabidopsis thaliana (Mouse-ear cress), this protein is Delta(8)-fatty-acid desaturase 2 (SLD2).